A 391-amino-acid chain; its full sequence is MMSCNYSFSSISPSSKSAFTSPSNFNLNPRLICCSAGGTVAEPKAINATQPLLLDAVRGKEVERPPVWLMRQAGRYMKSYQLLCEKYPLFRDRSENVDLVVEISLQPWKVFRPDGVILFSDILTPLSGMNIPFDIIKGKGPVIFDPLRTAADVEKVREFIPEKSVPYVGEALTILRKEVNNQAAVLGFVGAPFTLASYVVEGGSSKNFTKIKRLAFAEPKVLHALLQKFATSMAKYIRYQADSGAQAVQIFDSWATELSPVDFEEFSLPYLKQIVDSVKLTHPNLPLILYASGSGGLLERLPLTGVDVVSLDWTVDMADGRRRLGPNVAIQGNVDPGVLFGSKEFITNRINDTVKKAGKGKHILNLGHGIKVGTPEENFAHFFEIAKGLRY.

Residues 71 to 75 (RQAGR), Phe-90, Ser-120, Asp-121, Tyr-198, Ser-253, and His-368 contribute to the substrate site.

This sequence belongs to the uroporphyrinogen decarboxylase family. Homodimer.

The protein resides in the plastid. It localises to the chloroplast. The enzyme catalyses uroporphyrinogen III + 4 H(+) = coproporphyrinogen III + 4 CO2. Its pathway is porphyrin-containing compound metabolism; protoporphyrin-IX biosynthesis; coproporphyrinogen-III from 5-aminolevulinate: step 4/4. In terms of biological role, catalyzes the decarboxylation of four acetate groups of uroporphyrinogen-III to yield coproporphyrinogen-III. The polypeptide is Uroporphyrinogen decarboxylase, chloroplastic (DCUP) (Nicotiana tabacum (Common tobacco)).